A 236-amino-acid chain; its full sequence is VIGGDECNINEHRFLVALYTSRTLFCGGTLINQEWVLTAAHCNMEDIQIKLGMHSKKVPNEDEQKRVPKEKFFCLSSKKLYLWDKDIMLIRLDSPVKNSAHIAPLSLPSSPPSVGSVCRTMGWGRISSTKETYPDVPHCVNINLLEYEMCRAPYPEFELPATSRTLCAGILEGGKDTCVGDSGGPLICNGQFQGIASWGDHPCAQPHKPAAYTKVFDHLDWIENIIAGNTDASCPP.

Residues 1–227 (VIGGDECNIN…HLDWIENIIA (227 aa)) enclose the Peptidase S1 domain. 6 disulfide bridges follow: cysteine 7–cysteine 139, cysteine 26–cysteine 42, cysteine 74–cysteine 234, cysteine 118–cysteine 188, cysteine 150–cysteine 167, and cysteine 178–cysteine 203. Catalysis depends on charge relay system residues histidine 41 and aspartate 86. Serine 182 functions as the Charge relay system in the catalytic mechanism.

Belongs to the peptidase S1 family. Snake venom subfamily. Monomer. Expressed by the venom gland.

It localises to the secreted. Functionally, snake venom serine protease that may act in the hemostasis system of the prey. The protein is Snake venom serine protease pallase of Gloydius halys (Chinese water mocassin).